The primary structure comprises 493 residues: Tripartite motif-containing protein 5 (493 aa).

An N-acetylalanine modification is found at Ala2. The RING-type zinc-finger motif lies at 15–58; sequence CPICLELLTQPLSLDCGHSFCQACLTANHKTSMPDGERSCPVCR. Ser85 is subject to Phosphoserine. Residues 90 to 131 form a B box-type zinc finger; the sequence is QKVDHCARHGEKLLLFCREDRKVICWLCERSQEHRGHHTFLM. The Zn(2+) site is built by Cys95, His98, Cys117, and His123. Positions 130–240 form a coiled coil; sequence LMEEVAQEYQ…LISDLEHRLQ (111 aa). The interval 185–198 is required for interaction with GABARAP and for autophagy; the sequence is FEQLRHILDWVESN. Residues 281-493 enclose the B30.2/SPRY domain; it reads LQVTLEVLRE…VPMTLCSPSS (213 aa).

It belongs to the TRIM/RBCC family. As to quaternary structure, can form homodimers and homotrimers. In addition to lower-order dimerization, also exhibits a higher-order multimerization and both low- and high-order multimerizations are essential for its restriction activity. Interacts with BTBD1 and BTBD2. Interacts with PSMC4, PSMC5, PSMD7 and HSPA8/HSC70. Interacts (via B30.2/SPRY domain) with HSPA1A/B. Interacts with PSMC2, MAP3K7/TAK1, TAB2 and TAB3. Interacts with SQSTM1. Interacts with TRIM6 and TRIM34. Interacts with ULK1 (phosphorylated form), GABARAP, GABARAPL1, GABARAPL2, MAP1LC3A, MAP1LC3C and BECN1. Degraded in a proteasome-independent fashion in the absence of viral infection but in a proteasome-dependent fashion following exposure to restriction sensitive virus. In terms of processing, autoubiquitinated in a RING finger- and UBE2D2-dependent manner. Monoubiquitinated by TRIM21. Deubiquitinated by Yersinia YopJ. Ubiquitination may not lead to proteasomal degradation.

It is found in the cytoplasm. The protein resides in the nucleus. The catalysed reaction is S-ubiquitinyl-[E2 ubiquitin-conjugating enzyme]-L-cysteine + [acceptor protein]-L-lysine = [E2 ubiquitin-conjugating enzyme]-L-cysteine + N(6)-ubiquitinyl-[acceptor protein]-L-lysine.. The protein operates within protein modification; protein ubiquitination. Functionally, capsid-specific restriction factor that prevents infection from non-host-adapted retroviruses. Blocks viral replication early in the life cycle, after viral entry but before reverse transcription. In addition to acting as a capsid-specific restriction factor, also acts as a pattern recognition receptor that activates innate immune signaling in response to the retroviral capsid lattice. Binding to the viral capsid triggers its E3 ubiquitin ligase activity, and in concert with the heterodimeric ubiquitin conjugating enzyme complex UBE2V1-UBE2N (also known as UBC13-UEV1A complex) generates 'Lys-63'-linked polyubiquitin chains, which in turn are catalysts in the autophosphorylation of the MAP3K7/TAK1 complex (includes TAK1, TAB2, and TAB3). Activation of the MAP3K7/TAK1 complex by autophosphorylation results in the induction and expression of NF-kappa-B and MAPK-responsive inflammatory genes, thereby leading to an innate immune response in the infected cell. Plays a role in regulating autophagy through activation of autophagy regulator BECN1 by causing its dissociation from its inhibitors BCL2 and TAB2. This chain is Tripartite motif-containing protein 5 (TRIM5), found in Hylobates lar (Lar gibbon).